A 102-amino-acid chain; its full sequence is Small ribosomal subunit protein uS10 (102 aa).

The protein belongs to the universal ribosomal protein uS10 family. As to quaternary structure, part of the 30S ribosomal subunit.

Involved in the binding of tRNA to the ribosomes. The sequence is that of Small ribosomal subunit protein uS10 from Opitutus terrae (strain DSM 11246 / JCM 15787 / PB90-1).